Reading from the N-terminus, the 552-residue chain is Hydroxylamine reductase (552 aa).

Cysteine 5, cysteine 8, cysteine 20, and cysteine 27 together coordinate [2Fe-2S] cluster. Hybrid [4Fe-2O-2S] cluster contacts are provided by histidine 251, glutamate 275, cysteine 319, cysteine 407, cysteine 435, cysteine 460, glutamate 494, and lysine 496. Cysteine 407 bears the Cysteine persulfide mark.

The protein belongs to the HCP family. [2Fe-2S] cluster is required as a cofactor. It depends on hybrid [4Fe-2O-2S] cluster as a cofactor.

The protein resides in the cytoplasm. The catalysed reaction is A + NH4(+) + H2O = hydroxylamine + AH2 + H(+). Catalyzes the reduction of hydroxylamine to form NH(3) and H(2)O. The protein is Hydroxylamine reductase of Shigella sonnei (strain Ss046).